We begin with the raw amino-acid sequence, 778 residues long: DEK domain-containing chromatin-associated protein 4 (778 aa).

Disordered regions lie at residues 1–334 (MGEE…RPVR) and 475–689 (LVNE…PSDE). Residues 14-26 (ANGTSSLQKTSDA) show a composition bias toward polar residues. 4 stretches are compositionally biased toward basic and acidic residues: residues 40–95 (EVQE…PEAD), 121–153 (AVMK…KLEG), 165–185 (EEKL…KVEN), and 209–243 (TNKG…TESK). A coiled-coil region spans residues 191 to 300 (KEEALKEKNE…KEDIKKSNKR (110 aa)). Residues 244-286 (DENEDKEEEKEDEKEESMDDKEDEKEESNDDDKEDEKEESNDD) are compositionally biased toward acidic residues. Basic and acidic residues-rich tracts occupy residues 287–296 (KEDKKEDIKK) and 303–323 (GKTE…DIEP). The Nuclear localization signal 1 signature appears at 289–296 (DKKEDIKK). The Nuclear localization signal 2 signature appears at 489 to 496 (PKKSSPAA). Low complexity predominate over residues 491-502 (KSSPAAGSSSSK). Residues 526 to 587 (DDESEEEKED…EESEEETKKK (62 aa)) are a coiled coil. 2 stretches are compositionally biased toward acidic residues: residues 527-553 (DESE…EENE) and 560-582 (SEDE…ESEE). The Nuclear localization signal 3 motif lies at 618 to 625 (PKKATQKR). Residues 621–631 (ATQKRSAGKRK) show a composition bias toward basic residues. A compositionally biased stretch (basic and acidic residues) spans 678–689 (KGKDKNKEPSDE). In terms of domain architecture, DEK-C spans 685-740 (EPSDEELKTAIIDILKGVDFNTATFTDILKRLDAKFNISLASKKSSIKRMIQDELT). 2 DNA-binding regions span residues 703 to 717 (DFNT…KRLD) and 732 to 736 (KRMIQ). Residues 732–766 (KRMIQDELTKLADEAEDEEGEEEDAEHEEEEEKEK) are a coiled coil. The interval 741 to 778 (KLADEAEDEEGEEEDAEHEEEEEKEKAKGSGGGEEVKA) is disordered. Residues 745-763 (EAEDEEGEEEDAEHEEEEE) show a composition bias toward acidic residues. Positions 764 to 778 (KEKAKGSGGGEEVKA) are enriched in basic and acidic residues.

As to quaternary structure, interacts with DEK3.

It is found in the nucleus. Its subcellular location is the nucleolus. In terms of biological role, chromatin-associated protein which contributes to the modulation of chromatin structure (such as super-helical structure of DNA) and function. Binds to chromatin of protein-coding genes throughout the genome to regulate nucleosome occupancy and chromatin accessibility, and to modulate the expression of target genes. The polypeptide is DEK domain-containing chromatin-associated protein 4 (Arabidopsis thaliana (Mouse-ear cress)).